Here is a 315-residue protein sequence, read N- to C-terminus: Methionyl-tRNA formyltransferase (315 aa).

113-116 (SLLP) lines the (6S)-5,6,7,8-tetrahydrofolate pocket.

The protein belongs to the Fmt family.

It catalyses the reaction L-methionyl-tRNA(fMet) + (6R)-10-formyltetrahydrofolate = N-formyl-L-methionyl-tRNA(fMet) + (6S)-5,6,7,8-tetrahydrofolate + H(+). Functionally, attaches a formyl group to the free amino group of methionyl-tRNA(fMet). The formyl group appears to play a dual role in the initiator identity of N-formylmethionyl-tRNA by promoting its recognition by IF2 and preventing the misappropriation of this tRNA by the elongation apparatus. This chain is Methionyl-tRNA formyltransferase, found in Yersinia enterocolitica serotype O:8 / biotype 1B (strain NCTC 13174 / 8081).